We begin with the raw amino-acid sequence, 1500 residues long: Host cell factor (1500 aa).

Kelch repeat units lie at residues 85-133 (LMVV…VEGT), 135-181 (MFVF…RLGH), 189-237 (KIFL…TYGD), 259-307 (NLLI…MIGN), and 308-373 (KMYV…GIQS). Position 477 is a phosphoserine (Ser-477). The span at 517 to 528 (LLQSMSQPSSPA) shows a compositional bias: polar residues. Residues 517 to 543 (LLQSMSQPSSPASRADKDPLSSGGGTT) are disordered. 2 positions are modified to phosphoserine: Ser-958 and Ser-966. The disordered stretch occupies residues 1024–1061 (SEGQHGSEENENNGENATSSSASALFTGGDTAGPSRAQ). Over residues 1036-1047 (NGENATSSSASA) the composition is skewed to low complexity. The residue at position 1126 (Thr-1126) is a Phosphothreonine. Positions 1161 to 1185 (IGSLKENQDENKKFKQRQESSPSQN) are disordered. Residues 1166-1178 (ENQDENKKFKQRQ) are compositionally biased toward basic and acidic residues. 2 consecutive Fibronectin type-III domains span residues 1244–1341 (VQST…TCLP) and 1346–1457 (APSA…DPAA). A disordered region spans residues 1458–1500 (AKQHTPTVTPNLKRGPEKSTIGSSNIANTFCSPHKRGRNGLHD). A Bipartite nuclear localization signal motif is present at residues 1470-1495 (KRGPEKSTIGSSNIANTFCSPHKRGR). A compositionally biased stretch (polar residues) spans 1477 to 1488 (TIGSSNIANTFC). Position 1489 is a phosphoserine (Ser-1489). The segment covering 1490 to 1500 (PHKRGRNGLHD) has biased composition (basic residues).

As to quaternary structure, core component of several methyltransferase-containing complexes. Component of the SET1 complex, composed at least of the catalytic subunit Set1, wds/WDR5, Wdr82, Rbbp5, ash2, Cfp1/CXXC1, hcf and Dpy-30L1. Component of the MLL3/4 complex composed at least of the catalytic subunit trr, ash2, Rbbp5, Dpy-30L1, wds, hcf, ptip, Pa1, Utx, Lpt and Ncoa6. Component of the Ada2a-containing (ATAC) complex composed of at least Ada2a, Atac1, Hcf, Ada3, Gcn5, Mocs2B, Charac-14, Atac3, Atac2, NC2beta and wds. Post-translationally, proteolytic cleavage occurs between amino acids 900 and 1100 within the non-conserved central region, giving rise to two independent but tightly associated N- and C-terminal subunits.

Its subcellular location is the nucleus. May be involved in control of the cell cycle. In Drosophila melanogaster (Fruit fly), this protein is Host cell factor.